The following is a 389-amino-acid chain: Chalcone synthase 1 (389 aa).

The active site involves C163.

This sequence belongs to the thiolase-like superfamily. Chalcone/stilbene synthases family.

It carries out the reaction (E)-4-coumaroyl-CoA + 3 malonyl-CoA + 3 H(+) = 2',4,4',6'-tetrahydroxychalcone + 3 CO2 + 4 CoA. It functions in the pathway secondary metabolite biosynthesis; flavonoid biosynthesis. Its function is as follows. The primary product of this enzyme is 4,2',4',6'-tetrahydroxychalcone (also termed naringenin-chalcone or chalcone) which can under specific conditions spontaneously isomerize into naringenin. This chain is Chalcone synthase 1 (CHS1), found in Citrus sinensis (Sweet orange).